The following is a 607-amino-acid chain: UvrABC system protein C (607 aa).

The GIY-YIG domain occupies 11 to 89; it reads CKPGVYRFED…IKEFAPPCNV (79 aa). The UVR domain maps to 201–236; it reads SSLLESLKKKMLKASKNKEYEEAAILRDKIQAAQTV.

This sequence belongs to the UvrC family. Interacts with UvrB in an incision complex.

The protein localises to the cytoplasm. Its function is as follows. The UvrABC repair system catalyzes the recognition and processing of DNA lesions. UvrC both incises the 5' and 3' sides of the lesion. The N-terminal half is responsible for the 3' incision and the C-terminal half is responsible for the 5' incision. The sequence is that of UvrABC system protein C from Tropheryma whipplei (strain Twist) (Whipple's bacillus).